Here is a 444-residue protein sequence, read N- to C-terminus: Serine carboxypeptidase 2 (444 aa).

Substrate is bound at residue 60–62 (NGG). 3 cysteine pairs are disulfide-bonded: C65-C324, C222-C234, and C258-C291. 2 N-linked (GlcNAc...) asparagine glycosylation sites follow: N116 and N127. A substrate-binding site is contributed by 157 to 159 (ESY). S158 is a catalytic residue. N259 carries N-linked (GlcNAc...) asparagine glycosylation. The propeptide at 260 to 286 (ITSSSSSSSSSLSQQRRSRGRYPWLTG) is linker peptide. N-linked (GlcNAc...) asparagine glycans are attached at residues N312 and N318. Catalysis depends on residues D361 and H413. Position 409–413 (409–413 (RGAGH)) interacts with substrate.

The protein belongs to the peptidase S10 family. Carboxypeptidase II is a dimer, where each monomer is composed of two chains linked by a disulfide bond. In terms of processing, N-glycosylated.

It carries out the reaction Preferential release of a C-terminal arginine or lysine residue.. The protein is Serine carboxypeptidase 2 (CBP2) of Triticum aestivum (Wheat).